The primary structure comprises 148 residues: Small ribosomal subunit protein eS6 (148 aa).

Belongs to the eukaryotic ribosomal protein eS6 family.

The chain is Small ribosomal subunit protein eS6 from Pyrobaculum arsenaticum (strain DSM 13514 / JCM 11321 / PZ6).